The chain runs to 680 residues: Trehalase (680 aa).

A disordered region spans residues 1-27; sequence MVLHAQPPDQSTETAREAKALAGATDG.

It belongs to the glycosyl hydrolase 15 family. Homomultimer. It depends on phosphate as a cofactor.

The catalysed reaction is alpha,alpha-trehalose + H2O = alpha-D-glucose + beta-D-glucose. Its pathway is glycan degradation; trehalose degradation; D-glucose from alpha,alpha-trehalose: step 1/1. Its function is as follows. Catalyzes the hydrolysis of alpha,alpha-trehalose into two molecules of D-glucose. The protein is Trehalase of Mycobacterium tuberculosis (strain ATCC 25618 / H37Rv).